We begin with the raw amino-acid sequence, 197 residues long: ATP synthase protein MI25 (197 aa).

A helical membrane pass occupies residues 30 to 50 (ISIYNEEMIVARCFIGFLIFS).

This sequence belongs to the ATPase protein MI25 family. As to quaternary structure, F-type ATPases have 2 components, CF(1) - the catalytic core - and CF(0) - the membrane proton channel. CF(1) has five subunits: alpha(3), beta(3), gamma(1), delta(1), epsilon(1). CF(0) has three main subunits: a, b and c.

Its subcellular location is the mitochondrion membrane. Functionally, this is one of the chains of the nonenzymatic component (CF(0) subunit) of the mitochondrial ATPase complex. This Oryza sativa subsp. indica (Rice) protein is ATP synthase protein MI25.